Here is a 511-residue protein sequence, read N- to C-terminus: Histidine ammonia-lyase (511 aa).

A cross-link (5-imidazolinone (Ala-Gly)) is located at residues 142–144 (ASG). The residue at position 143 (serine 143) is a 2,3-didehydroalanine (Ser).

The protein belongs to the PAL/histidase family. Post-translationally, contains an active site 4-methylidene-imidazol-5-one (MIO), which is formed autocatalytically by cyclization and dehydration of residues Ala-Ser-Gly.

The protein resides in the cytoplasm. It catalyses the reaction L-histidine = trans-urocanate + NH4(+). It participates in amino-acid degradation; L-histidine degradation into L-glutamate; N-formimidoyl-L-glutamate from L-histidine: step 1/3. The protein is Histidine ammonia-lyase (hutH) of Rhizobium meliloti (strain 1021) (Ensifer meliloti).